We begin with the raw amino-acid sequence, 398 residues long: Phosphoglycerate kinase (398 aa).

Substrate is bound by residues 21–23 (DFN), arginine 36, 59–62 (HLGR), arginine 119, and arginine 157. ATP is bound by residues lysine 208, glycine 296, glutamate 327, and 354–357 (GGDS).

It belongs to the phosphoglycerate kinase family. In terms of assembly, monomer.

It localises to the cytoplasm. The enzyme catalyses (2R)-3-phosphoglycerate + ATP = (2R)-3-phospho-glyceroyl phosphate + ADP. It participates in carbohydrate degradation; glycolysis; pyruvate from D-glyceraldehyde 3-phosphate: step 2/5. The polypeptide is Phosphoglycerate kinase (Streptococcus equi subsp. zooepidemicus (strain H70)).